A 683-amino-acid polypeptide reads, in one-letter code: Methionine--tRNA ligase (683 aa).

The 'HIGH' region signature appears at 14–24 (PYANGSIHLGH). Residues cysteine 145, cysteine 148, cysteine 158, and cysteine 161 each coordinate Zn(2+). The 'KMSKS' region motif lies at 331–335 (KMSKS). ATP is bound at residue lysine 334. Residues 581-683 (AFAAVDLRVA…SGAKPGQRIK (103 aa)) form the tRNA-binding domain.

It belongs to the class-I aminoacyl-tRNA synthetase family. MetG type 1 subfamily. As to quaternary structure, homodimer. Zn(2+) serves as cofactor.

It is found in the cytoplasm. The catalysed reaction is tRNA(Met) + L-methionine + ATP = L-methionyl-tRNA(Met) + AMP + diphosphate. Is required not only for elongation of protein synthesis but also for the initiation of all mRNA translation through initiator tRNA(fMet) aminoacylation. In Pseudomonas fluorescens (strain SBW25), this protein is Methionine--tRNA ligase.